The sequence spans 201 residues: Ras-related protein Rab-9B (201 aa).

GTP contacts are provided by valine 18, glycine 19, lysine 20, serine 21, serine 22, aspartate 33, serine 34, alanine 36, histidine 38, and threonine 39. Residue serine 21 coordinates Mg(2+). The Switch 1 signature appears at 31 to 42 (KFDSQAFHTIGV). Phosphoserine is present on serine 34. Mg(2+) is bound by residues threonine 39 and aspartate 62. Positions 64 to 78 (AGQERFKSLRTPFYR) match the Switch 2 motif. GTP contacts are provided by glycine 65, asparagine 124, lysine 125, alanine 155, and lysine 156. S-geranylgeranyl cysteine attachment occurs at residues cysteine 200 and cysteine 201.

The protein belongs to the small GTPase superfamily. Rab family. In terms of assembly, interacts (GTP-bound form) with SGSM1; the GDP-bound form has much lower affinity for SGSM1. The GTP-bound form but not the GDP-bound form interacts with HPS4 and the BLOC-3 complex (heterodimer of HPS1 and HPS4) but does not interact with HPS1 alone. Interacts (GTP-bound form) with NDE1. Mg(2+) is required as a cofactor. In terms of tissue distribution, ubiquitous.

It is found in the cell membrane. The protein resides in the cytoplasmic vesicle. The protein localises to the phagosome. It localises to the phagosome membrane. The catalysed reaction is GTP + H2O = GDP + phosphate + H(+). Its activity is regulated as follows. Regulated by guanine nucleotide exchange factors (GEFs) which promote the exchange of bound GDP for free GTP. Regulated by GTPase activating proteins (GAPs) which increase the GTP hydrolysis activity. Inhibited by GDP dissociation inhibitors (GDIs). In terms of biological role, the small GTPases Rab are key regulators of intracellular membrane trafficking, from the formation of transport vesicles to their fusion with membranes. Rabs cycle between an inactive GDP-bound form and an active GTP-bound form that is able to recruit to membranes different sets of downstream effectors directly responsible for vesicle formation, movement, tethering and fusion. RAB9B is involved in the transport of proteins between the endosomes and the trans Golgi network. May use NDE1/NDEL1 as an effector to interact with the dynein motor complex in order to control retrograde trafficking of RAB9-associated late endosomes to the TGN. This Homo sapiens (Human) protein is Ras-related protein Rab-9B.